The primary structure comprises 224 residues: Uracil-DNA glycosylase (224 aa).

The active-site Proton acceptor is aspartate 64.

This sequence belongs to the uracil-DNA glycosylase (UDG) superfamily. UNG family.

It is found in the cytoplasm. It catalyses the reaction Hydrolyzes single-stranded DNA or mismatched double-stranded DNA and polynucleotides, releasing free uracil.. In terms of biological role, excises uracil residues from the DNA which can arise as a result of misincorporation of dUMP residues by DNA polymerase or due to deamination of cytosine. This is Uracil-DNA glycosylase from Geobacillus sp. (strain WCH70).